We begin with the raw amino-acid sequence, 1402 residues long: DNA-directed RNA polymerase subunit beta' (1402 aa).

Positions 73, 75, 88, and 91 each coordinate Zn(2+). Residues Asp-464, Asp-466, and Asp-468 each coordinate Mg(2+). Zn(2+) is bound by residues Cys-812, Cys-886, Cys-893, and Cys-896.

It belongs to the RNA polymerase beta' chain family. The RNAP catalytic core consists of 2 alpha, 1 beta, 1 beta' and 1 omega subunit. When a sigma factor is associated with the core the holoenzyme is formed, which can initiate transcription. The cofactor is Mg(2+). Requires Zn(2+) as cofactor.

The catalysed reaction is RNA(n) + a ribonucleoside 5'-triphosphate = RNA(n+1) + diphosphate. Its function is as follows. DNA-dependent RNA polymerase catalyzes the transcription of DNA into RNA using the four ribonucleoside triphosphates as substrates. This Rhodopseudomonas palustris (strain ATCC BAA-98 / CGA009) protein is DNA-directed RNA polymerase subunit beta'.